The sequence spans 734 residues: Photosystem I P700 chlorophyll a apoprotein A2 (734 aa).

8 helical membrane passes run 46-69, 135-158, 175-199, 273-291, 330-353, 369-395, 417-439, and 517-535; these read IFAS…FHVA, LYTG…FHLQ, LNHH…HVAI, IAHH…GHMY, LHFQ…QHMY, AALY…IFFI, AIIS…LYVH, and FLVH…LILV. The [4Fe-4S] cluster site is built by cysteine 559 and cysteine 568. 2 helical membrane passes run 575-596 and 643-665; these read AFYL…YWHW and LSVW…MFLI. Residues histidine 654, methionine 662, and tyrosine 670 each contribute to the chlorophyll a site. Tryptophan 671 serves as a coordination point for phylloquinone. Residues 707 to 727 form a helical membrane-spanning segment; it reads LVGLAHFSVGYIFTYAAFLIA.

The protein belongs to the PsaA/PsaB family. As to quaternary structure, the PsaA/B heterodimer binds the P700 chlorophyll special pair and subsequent electron acceptors. PSI consists of a core antenna complex that captures photons, and an electron transfer chain that converts photonic excitation into a charge separation. The eukaryotic PSI reaction center is composed of at least 11 subunits. P700 is a chlorophyll a/chlorophyll a' dimer, A0 is one or more chlorophyll a, A1 is one or both phylloquinones and FX is a shared 4Fe-4S iron-sulfur center. serves as cofactor.

Its subcellular location is the plastid. It localises to the chloroplast thylakoid membrane. It carries out the reaction reduced [plastocyanin] + hnu + oxidized [2Fe-2S]-[ferredoxin] = oxidized [plastocyanin] + reduced [2Fe-2S]-[ferredoxin]. PsaA and PsaB bind P700, the primary electron donor of photosystem I (PSI), as well as the electron acceptors A0, A1 and FX. PSI is a plastocyanin-ferredoxin oxidoreductase, converting photonic excitation into a charge separation, which transfers an electron from the donor P700 chlorophyll pair to the spectroscopically characterized acceptors A0, A1, FX, FA and FB in turn. Oxidized P700 is reduced on the lumenal side of the thylakoid membrane by plastocyanin. This Jasminum nudiflorum (Winter jasmine) protein is Photosystem I P700 chlorophyll a apoprotein A2.